The chain runs to 185 residues: TATA-box-binding protein 2 (185 aa).

2 tandem repeats follow at residues I7–L84 and V100–L178.

It belongs to the TBP family.

General factor that plays a role in the activation of archaeal genes transcribed by RNA polymerase. Binds specifically to the TATA box promoter element which lies close to the position of transcription initiation. The protein is TATA-box-binding protein 2 of Methanosarcina acetivorans (strain ATCC 35395 / DSM 2834 / JCM 12185 / C2A).